The following is a 287-amino-acid chain: ATP synthase gamma chain (287 aa).

This sequence belongs to the ATPase gamma chain family. As to quaternary structure, F-type ATPases have 2 components, CF(1) - the catalytic core - and CF(0) - the membrane proton channel. CF(1) has five subunits: alpha(3), beta(3), gamma(1), delta(1), epsilon(1). CF(0) has three main subunits: a, b and c.

The protein resides in the cell inner membrane. Produces ATP from ADP in the presence of a proton gradient across the membrane. The gamma chain is believed to be important in regulating ATPase activity and the flow of protons through the CF(0) complex. This chain is ATP synthase gamma chain, found in Sodalis glossinidius (strain morsitans).